Consider the following 596-residue polypeptide: Elongation factor 4 (596 aa).

Positions 2-184 (KHIRNFSIIA…EIIAKIPPPV (183 aa)) constitute a tr-type G domain. GTP is bound by residues 14–19 (DHGKST) and 131–134 (NKID).

It belongs to the TRAFAC class translation factor GTPase superfamily. Classic translation factor GTPase family. LepA subfamily.

It localises to the cell inner membrane. The catalysed reaction is GTP + H2O = GDP + phosphate + H(+). Required for accurate and efficient protein synthesis under certain stress conditions. May act as a fidelity factor of the translation reaction, by catalyzing a one-codon backward translocation of tRNAs on improperly translocated ribosomes. Back-translocation proceeds from a post-translocation (POST) complex to a pre-translocation (PRE) complex, thus giving elongation factor G a second chance to translocate the tRNAs correctly. Binds to ribosomes in a GTP-dependent manner. This chain is Elongation factor 4, found in Shewanella frigidimarina (strain NCIMB 400).